Reading from the N-terminus, the 284-residue chain is Quinate/shikimate dehydrogenase (NAD(+)) (284 aa).

The shikimate site is built by Ser-18 and Thr-70. L-quinate-binding positions include 18–20 (SRT) and Thr-70. The active-site Proton acceptor is Tyr-73. Lys-74, Asn-95, and Asp-111 together coordinate shikimate. Residues Lys-74, Asn-95, and Asp-111 each contribute to the L-quinate site. NAD(+) contacts are provided by residues 137–138 (GG), Asp-159, Arg-164, 203–206 (TPMG), Ala-214, Val-229, and Gly-252. Gln-259 serves as a coordination point for shikimate. Gln-259 is an L-quinate binding site.

Belongs to the shikimate dehydrogenase family. As to quaternary structure, homodimer.

It catalyses the reaction L-quinate + NAD(+) = 3-dehydroquinate + NADH + H(+). The catalysed reaction is shikimate + NAD(+) = 3-dehydroshikimate + NADH + H(+). It participates in metabolic intermediate biosynthesis; chorismate biosynthesis; chorismate from D-erythrose 4-phosphate and phosphoenolpyruvate: step 4/7. The protein operates within aromatic compound metabolism; 3,4-dihydroxybenzoate biosynthesis; 3-dehydroquinate from D-quinate (NAD(+) route). In terms of biological role, involved in the biosynthesis of the chorismate, which leads to the biosynthesis of aromatic amino acids, and plays a key role in the quinate degradation pathway. Catalyzes the NAD(+)-dependent oxidation of both quinate and shikimate to 3-dehydroquinate and 3-dehydroshikimate, respectively. It can only use NAD. The protein is Quinate/shikimate dehydrogenase (NAD(+)) of Corynebacterium efficiens (strain DSM 44549 / YS-314 / AJ 12310 / JCM 11189 / NBRC 100395).